The primary structure comprises 102 residues: NADH-quinone oxidoreductase subunit K (102 aa).

The next 3 helical transmembrane spans lie at 5-25 (LGHF…GIFL), 31-51 (IVLL…FVAF), and 62-82 (IFVF…LAIL).

This sequence belongs to the complex I subunit 4L family. As to quaternary structure, NDH-1 is composed of 14 different subunits. Subunits NuoA, H, J, K, L, M, N constitute the membrane sector of the complex.

Its subcellular location is the cell inner membrane. The enzyme catalyses a quinone + NADH + 5 H(+)(in) = a quinol + NAD(+) + 4 H(+)(out). Its function is as follows. NDH-1 shuttles electrons from NADH, via FMN and iron-sulfur (Fe-S) centers, to quinones in the respiratory chain. The immediate electron acceptor for the enzyme in this species is believed to be ubiquinone. Couples the redox reaction to proton translocation (for every two electrons transferred, four hydrogen ions are translocated across the cytoplasmic membrane), and thus conserves the redox energy in a proton gradient. The sequence is that of NADH-quinone oxidoreductase subunit K from Albidiferax ferrireducens (strain ATCC BAA-621 / DSM 15236 / T118) (Rhodoferax ferrireducens).